Consider the following 291-residue polypeptide: D-alanine--D-alanine ligase (291 aa).

Residues Lys-99–Thr-291 enclose the ATP-grasp domain. Glu-125–Thr-179 contributes to the ATP binding site. Mg(2+)-binding residues include Asp-245, Glu-258, and Asn-260.

It belongs to the D-alanine--D-alanine ligase family. Mg(2+) serves as cofactor. Mn(2+) is required as a cofactor.

It is found in the cytoplasm. It catalyses the reaction 2 D-alanine + ATP = D-alanyl-D-alanine + ADP + phosphate + H(+). Its pathway is cell wall biogenesis; peptidoglycan biosynthesis. Functionally, cell wall formation. The sequence is that of D-alanine--D-alanine ligase from Aquifex aeolicus (strain VF5).